A 392-amino-acid chain; its full sequence is Tryptophan 2,3-dioxygenase (392 aa).

Substrate is bound by residues 57–61 and R128; that span reads FIVTH. Position 313 (H313) interacts with heme. Residue T328 coordinates substrate.

The protein belongs to the tryptophan 2,3-dioxygenase family. As to quaternary structure, homotetramer. Dimer of dimers. Heme is required as a cofactor.

The enzyme catalyses L-tryptophan + O2 = N-formyl-L-kynurenine. The protein operates within amino-acid degradation; L-tryptophan degradation via kynurenine pathway; L-kynurenine from L-tryptophan: step 1/2. Its pathway is pigment biosynthesis; ommochrome biosynthesis. Heme-dependent dioxygenase that catalyzes the oxidative cleavage of the L-tryptophan (L-Trp) pyrrole ring and converts L-tryptophan to N-formyl-L-kynurenine. Catalyzes the oxidative cleavage of the indole moiety. The chain is Tryptophan 2,3-dioxygenase from Anopheles gambiae (African malaria mosquito).